A 331-amino-acid chain; its full sequence is L-lactate dehydrogenase A chain (331 aa).

Residues 29–57 (GMVGMASAISILLKDLCDELAMVDVMEDK) and R98 contribute to the NAD(+) site. Substrate contacts are provided by R105, N137, and R168. N137 provides a ligand contact to NAD(+). The active-site Proton acceptor is the H192. T247 contributes to the substrate binding site.

This sequence belongs to the LDH/MDH superfamily. LDH family. Homotetramer.

Its subcellular location is the cytoplasm. It catalyses the reaction (S)-lactate + NAD(+) = pyruvate + NADH + H(+). It functions in the pathway fermentation; pyruvate fermentation to lactate; (S)-lactate from pyruvate: step 1/1. Its function is as follows. Interconverts simultaneously and stereospecifically pyruvate and lactate with concomitant interconversion of NADH and NAD(+). In Patagonotothen tessellata (Black southern cod), this protein is L-lactate dehydrogenase A chain (ldha).